The chain runs to 158 residues: Deoxyuridine 5'-triphosphate nucleotidohydrolase (158 aa).

Residues 75–77 (RSG), N88, 92–94 (TVD), and K102 each bind substrate.

The protein belongs to the dUTPase family. It depends on Mg(2+) as a cofactor.

The catalysed reaction is dUTP + H2O = dUMP + diphosphate + H(+). Its pathway is pyrimidine metabolism; dUMP biosynthesis; dUMP from dCTP (dUTP route): step 2/2. Its function is as follows. This enzyme is involved in nucleotide metabolism: it produces dUMP, the immediate precursor of thymidine nucleotides and it decreases the intracellular concentration of dUTP so that uracil cannot be incorporated into DNA. In Bifidobacterium longum (strain DJO10A), this protein is Deoxyuridine 5'-triphosphate nucleotidohydrolase.